Here is a 200-residue protein sequence, read N- to C-terminus: MDYYAKPVARLIEQLARLPGIGPKTAQRLAFYLLNAPLEVALNLARAVEEARQAVRYCSVCGNLTDTDPCFICGDDRRRRDLLCVVERPRDVVALEKARVFKGLYHVLHGSISPVEGIGPEQLRIRELLKRLEGGTVREVILATNPTVEGETTALYLAGLIKPLGVSVTRIAHGLPVGADLEYADEMTLSKALEGRREMK.

The C4-type zinc finger occupies C58–C73. The region spanning D81–P176 is the Toprim domain.

It belongs to the RecR family.

In terms of biological role, may play a role in DNA repair. It seems to be involved in an RecBC-independent recombinational process of DNA repair. It may act with RecF and RecO. The protein is Recombination protein RecR of Pelotomaculum thermopropionicum (strain DSM 13744 / JCM 10971 / SI).